The following is a 156-amino-acid chain: Small ribosomal subunit protein uS7 (156 aa).

The protein belongs to the universal ribosomal protein uS7 family. As to quaternary structure, part of the 30S ribosomal subunit. Contacts proteins S9 and S11.

Functionally, one of the primary rRNA binding proteins, it binds directly to 16S rRNA where it nucleates assembly of the head domain of the 30S subunit. Is located at the subunit interface close to the decoding center, probably blocks exit of the E-site tRNA. The sequence is that of Small ribosomal subunit protein uS7 from Chelativorans sp. (strain BNC1).